The following is a 365-amino-acid chain: DNA replication and repair protein RecF (365 aa).

ATP is bound at residue 23–30 (GPNGIGKS).

This sequence belongs to the RecF family.

The protein resides in the cytoplasm. Its function is as follows. The RecF protein is involved in DNA metabolism; it is required for DNA replication and normal SOS inducibility. RecF binds preferentially to single-stranded, linear DNA. It also seems to bind ATP. The protein is DNA replication and repair protein RecF of Parasynechococcus marenigrum (strain WH8102).